The chain runs to 94 residues: Integration host factor subunit beta (94 aa).

Belongs to the bacterial histone-like protein family. Heterodimer of an alpha and a beta chain.

Functionally, this protein is one of the two subunits of integration host factor, a specific DNA-binding protein that functions in genetic recombination as well as in transcriptional and translational control. In Escherichia fergusonii (strain ATCC 35469 / DSM 13698 / CCUG 18766 / IAM 14443 / JCM 21226 / LMG 7866 / NBRC 102419 / NCTC 12128 / CDC 0568-73), this protein is Integration host factor subunit beta.